The sequence spans 221 residues: Probable glutathione S-transferase (221 aa).

One can recognise a GST N-terminal domain in the interval 4–83; that stretch reads EEVILLDFWP…YIEEVWKDKA (80 aa). Residues Ser14, Lys41, Ile55, and 67–68 each bind glutathione; that span reads ES. Positions 90 to 214 constitute a GST C-terminal domain; that stretch reads DPYDRAQARF…PKVLEFVKVL (125 aa).

It belongs to the GST superfamily. HSP26 family. As to expression, root tip-specific expression.

It carries out the reaction RX + glutathione = an S-substituted glutathione + a halide anion + H(+). The protein is Probable glutathione S-transferase of Nicotiana tabacum (Common tobacco).